The sequence spans 226 residues: 7-cyano-7-deazaguanine synthase (226 aa).

8–18 (ISGGLDSTTCL) contributes to the ATP binding site. Zn(2+) contacts are provided by cysteine 188, cysteine 198, cysteine 201, and cysteine 204.

It belongs to the QueC family. Zn(2+) serves as cofactor.

It catalyses the reaction 7-carboxy-7-deazaguanine + NH4(+) + ATP = 7-cyano-7-deazaguanine + ADP + phosphate + H2O + H(+). It functions in the pathway purine metabolism; 7-cyano-7-deazaguanine biosynthesis. Its function is as follows. Catalyzes the ATP-dependent conversion of 7-carboxy-7-deazaguanine (CDG) to 7-cyano-7-deazaguanine (preQ(0)). In Coxiella burnetii (strain RSA 493 / Nine Mile phase I), this protein is 7-cyano-7-deazaguanine synthase.